Reading from the N-terminus, the 120-residue chain is MKFISTFLTFILAAVSVTASSDEDIAQVPAEAIIGYLDFGGDHDIAFLPFSNATASGLLFINTTIAEAAEKEQNTTLAKREAVADAWHWLNLRPGQPMYKREANADAWHWLQLKPGQPMY.

The first 21 residues, 1-21 (MKFISTFLTFILAAVSVTASS), serve as a signal peptide directing secretion. 2 propeptides span residues 22–86 (DEDI…VADA) and 102–107 (EANADA).

In terms of biological role, the active factor is excreted into the culture medium by haploid cells of the alpha mating type and acts on cells of the opposite mating type (type A). It mediates the conjugation process between the two types by inhibiting the initiation of DNA synthesis in type a cells and synchronizing them with type alpha. The sequence is that of Mating factor alpha-2 (MF(ALPHA)2) from Saccharomyces cerevisiae (strain ATCC 204508 / S288c) (Baker's yeast).